A 64-amino-acid polypeptide reads, in one-letter code: Large ribosomal subunit protein bL35 (64 aa).

The tract at residues 1 to 43 is disordered; sequence MPKMKSKKSLAKRVIAKKNGTLKRGKAYRSHRATGKTTKQKRH.

It belongs to the bacterial ribosomal protein bL35 family.

This is Large ribosomal subunit protein bL35 from Mesoplasma florum (strain ATCC 33453 / NBRC 100688 / NCTC 11704 / L1) (Acholeplasma florum).